Reading from the N-terminus, the 762-residue chain is Putative cation exchanger YDL206W (762 aa).

An N-terminal signal peptide occupies residues 1 to 26 (MHKPLRWLITIAFYVSNVILIGYSLS). Residues 27 to 30 (SNGS) lie on the Extracellular side of the membrane. N28 carries N-linked (GlcNAc...) asparagine glycosylation. A helical transmembrane segment spans residues 31–51 (ISEFYLHSVVLIECFSLLGVV). Residues 52–102 (TSDCLTPSLSYISSNIFHISDRVSGMTLLALGNALPDITSTYQSMKSGVTS) lie on the Cytoplasmic side of the membrane. The helical transmembrane segment at 103–123 (LAIGELFGGIFFLLTVVIGLM) threads the bilayer. Over 124-156 (GCVATIQFQHDKSIETYTEESFDQNLSYDRSNY) the chain is Extracellular. N148 carries N-linked (GlcNAc...) asparagine glycosylation. The chain crosses the membrane as a helical span at residues 157–177 (ILDVGIFTFMLLVSGTFLADG). A topological domain (cytoplasmic) is located at residue R178. Residues 179-199 (LYFWECIVMVLTYCCCAVYLI) form a helical membrane-spanning segment. Residues 200–501 (KSYKYPCEIN…YNYLTDVSLE (302 aa)) lie on the Extracellular side of the membrane. N-linked (GlcNAc...) asparagine glycosylation is found at N280 and N329. Residues 502-522 (IGFFEFLSLLVTTPVSIILYL) traverse the membrane as a helical segment. At 523 to 554 (SIPSEISQTDHDLPLSYLQNIQLIASPIILNQ) the chain is on the cytoplasmic side. The helical transmembrane segment at 555–575 (LITNNFSFWLLILSLVIAILL) threads the bilayer. Over 576-589 (YFKTRTIPNKFNSD) the chain is Extracellular. The chain crosses the membrane as a helical span at residues 590-610 (IIFTVAFLLSLACLSKAVHII). The Cytoplasmic segment spans residues 611–615 (VVTLT). Residues 616–636 (HWINVFNISETILGLTIFTWG) form a helical membrane-spanning segment. At 637-650 (NSIGDLVSNITFVK) the chain is on the extracellular side. N645 carries an N-linked (GlcNAc...) asparagine glycan. Residues 651-671 (IGVLEIAIGACFGSPLLYFLF) form a helical membrane-spanning segment. Topologically, residues 672–709 (GVGFDGIMIMLGDKTGKIVSGRDSNILMHHIDFKVDKN) are cytoplasmic. A helical membrane pass occupies residues 710 to 730 (LINTGVGILIAFLIFTVLIPL). Over 731–738 (NDWKIDKK) the chain is Extracellular. A helical transmembrane segment spans residues 739-759 (ISIALLTLYIVVTCISVFLEV). Topologically, residues 760-762 (HQV) are cytoplasmic.

The protein belongs to the Ca(2+):cation antiporter (CaCA) (TC 2.A.19) family.

It is found in the membrane. Putative cation exchanger. The polypeptide is Putative cation exchanger YDL206W (Saccharomyces cerevisiae (strain ATCC 204508 / S288c) (Baker's yeast)).